A 182-amino-acid polypeptide reads, in one-letter code: MPLDVALKRKYYEEVRPELIRRFGYQNVWEVPRLEKVVINQGLGEAKEDARILEKAAQELALITGQKPAVTRAKKSISNFKLRKGMPIGLRVTLRRDRMWIFLEKLLNVALPRIRDFRGLNPNSFDGRGNYNLGLREQLIFPEITYDMVDALRGMDIAVVTTAETDEEARALLELLGFPFRK.

Part of the 50S ribosomal subunit; part of the 5S rRNA/uL5/uL18/bL25 (TL7) subcomplex; has also been isolated as a complex with 5S rRNA, bL25 (TL7) and DNA binding protein II. Forms a bridge to the 30S subunit in the 70S ribosome, contacting protein uS13; this bridge is straddled by the 5S rRNA. Contacts the P site tRNA.

Its function is as follows. This is one of the proteins that bind and probably mediate the attachment of the 5S RNA into the large ribosomal subunit, where it forms part of the central protuberance. In the 70S ribosome it contacts protein S13 of the 30S subunit (forming bridge B1b) connecting the head of the 30S subunit to the top of the 50S subunit. The bridge itself contacts the P site tRNA and is implicated in movement during ribosome translocation. Also contacts the P site tRNA independently of the intersubunit bridge; the 5S rRNA and some of its associated proteins might help stabilize positioning of ribosome-bound tRNAs. The chain is Large ribosomal subunit protein uL5 (rplE) from Thermus thermophilus (strain ATCC 27634 / DSM 579 / HB8).